A 292-amino-acid polypeptide reads, in one-letter code: 33 kDa chaperonin (292 aa).

2 disulfide bridges follow: C237–C239 and C270–C273.

It belongs to the HSP33 family. Post-translationally, under oxidizing conditions two disulfide bonds are formed involving the reactive cysteines. Under reducing conditions zinc is bound to the reactive cysteines and the protein is inactive.

The protein resides in the cytoplasm. Its function is as follows. Redox regulated molecular chaperone. Protects both thermally unfolding and oxidatively damaged proteins from irreversible aggregation. Plays an important role in the bacterial defense system toward oxidative stress. The protein is 33 kDa chaperonin of Lachnoclostridium phytofermentans (strain ATCC 700394 / DSM 18823 / ISDg) (Clostridium phytofermentans).